The sequence spans 78 residues: Probable [Fe-S]-dependent transcriptional repressor (78 aa).

Cys-56, Cys-61, Cys-64, and Cys-70 together coordinate iron-sulfur cluster.

The protein belongs to the FeoC family.

Its function is as follows. May function as a transcriptional regulator that controls feoABC expression. The polypeptide is Probable [Fe-S]-dependent transcriptional repressor (Escherichia coli O7:K1 (strain IAI39 / ExPEC)).